The primary structure comprises 273 residues: Galactose-binding lectin (273 aa).

Positions 1 to 23 are cleaved as a signal peptide; it reads MKPFCVFLTFFLLLAASSKKVDS. Residues Glu144 and Asp146 each contribute to the Mn(2+) site. Positions 146, 148, 150, and 155 each coordinate Ca(2+). The Mn(2+) site is built by Asp155 and His160.

It belongs to the leguminous lectin family. Homotetramer.

D-galactose specific lectin. The chain is Galactose-binding lectin from Arachis hypogaea (Peanut).